The primary structure comprises 208 residues: FMN-dependent NADH:quinone oxidoreductase 1 (208 aa).

Belongs to the azoreductase type 1 family. In terms of assembly, homodimer. Requires FMN as cofactor.

The catalysed reaction is 2 a quinone + NADH + H(+) = 2 a 1,4-benzosemiquinone + NAD(+). It carries out the reaction N,N-dimethyl-1,4-phenylenediamine + anthranilate + 2 NAD(+) = 2-(4-dimethylaminophenyl)diazenylbenzoate + 2 NADH + 2 H(+). Its function is as follows. Quinone reductase that provides resistance to thiol-specific stress caused by electrophilic quinones. In terms of biological role, also exhibits azoreductase activity. Catalyzes the reductive cleavage of the azo bond in aromatic azo compounds to the corresponding amines. This Bacillus thuringiensis subsp. konkukian (strain 97-27) protein is FMN-dependent NADH:quinone oxidoreductase 1.